Here is a 731-residue protein sequence, read N- to C-terminus: 1,4-alpha-glucan branching enzyme GlgB (731 aa).

The active-site Nucleophile is D409. E462 functions as the Proton donor in the catalytic mechanism.

This sequence belongs to the glycosyl hydrolase 13 family. GlgB subfamily. In terms of assembly, monomer.

The enzyme catalyses Transfers a segment of a (1-&gt;4)-alpha-D-glucan chain to a primary hydroxy group in a similar glucan chain.. Its pathway is glycan biosynthesis; glycogen biosynthesis. In terms of biological role, catalyzes the formation of the alpha-1,6-glucosidic linkages in glycogen by scission of a 1,4-alpha-linked oligosaccharide from growing alpha-1,4-glucan chains and the subsequent attachment of the oligosaccharide to the alpha-1,6 position. This chain is 1,4-alpha-glucan branching enzyme GlgB (glgB), found in Dickeya chrysanthemi (Pectobacterium chrysanthemi).